We begin with the raw amino-acid sequence, 614 residues long: Zinc finger protein 276 (614 aa).

Positions 1–46 (MKRDRLGRFLSPGIARQRGGSGGGCGSGRTRGRPSRSGGTSADGAA) are disordered. The span at 19–29 (GGSGGGCGSGR) shows a compositional bias: gly residues. The ZAD domain occupies 78-164 (GHCRLCHGKF…LQRVNVSPAG (87 aa)). Residues Cys-80, Cys-83, Cys-137, and Cys-140 each coordinate Zn(2+). A disordered region spans residues 271-422 (RLAQNSESNP…PGPKPGWKKK (152 aa)). Polar residues-rich tracts occupy residues 272-282 (LAQNSESNPTG) and 291-302 (RETQVGSETKTL). A compositionally biased stretch (acidic residues) spans 357–369 (SDLSEGDFLSEDE). The span at 386 to 408 (YPEKKVSGKKSEGREAKRPEEPK) shows a compositional bias: basic and acidic residues. Over residues 409 to 422 (IRKKPGPKPGWKKK) the composition is skewed to basic residues. C2H2-type zinc fingers lie at residues 434–458 (YKCP…IKEH), 465–490 (RPCP…KLIH), 496–518 (YICD…QMRH), 524–546 (LQCE…MTKH), and 554–577 (FACD…SMVH). The segment at 588–614 (PLEAEPPPGPLSPSGTMEGQAVKPEPT) is disordered.

In terms of tissue distribution, found in all the examined tissues, with highest levels in kidney, liver, lung, and spleen.

Its subcellular location is the nucleus. The protein localises to the chromosome. It localises to the centromere. It is found in the kinetochore. May be involved in transcriptional regulation. The polypeptide is Zinc finger protein 276 (Znf276) (Mus musculus (Mouse)).